The primary structure comprises 276 residues: Putative ripening-related protein 5 (276 aa).

The N-terminal stretch at 1 to 18 is a signal peptide; that stretch reads MAMIFLLAALSTTHLASS.

Belongs to the kiwellin family.

The protein localises to the secreted. This Oryza sativa subsp. japonica (Rice) protein is Putative ripening-related protein 5.